A 335-amino-acid chain; its full sequence is RNA 3'-terminal phosphate cyclase (335 aa).

Residues glutamine 101 and 282–285 (HMGD) each bind ATP. The active-site Tele-AMP-histidine intermediate is histidine 306.

This sequence belongs to the RNA 3'-terminal cyclase family. Type 1 subfamily.

It localises to the cytoplasm. The catalysed reaction is a 3'-end 3'-phospho-ribonucleotide-RNA + ATP = a 3'-end 2',3'-cyclophospho-ribonucleotide-RNA + AMP + diphosphate. Its function is as follows. Catalyzes the conversion of 3'-phosphate to a 2',3'-cyclic phosphodiester at the end of RNA. The mechanism of action of the enzyme occurs in 3 steps: (A) adenylation of the enzyme by ATP; (B) transfer of adenylate to an RNA-N3'P to produce RNA-N3'PP5'A; (C) and attack of the adjacent 2'-hydroxyl on the 3'-phosphorus in the diester linkage to produce the cyclic end product. The biological role of this enzyme is unknown but it is likely to function in some aspects of cellular RNA processing. The chain is RNA 3'-terminal phosphate cyclase from Sulfolobus acidocaldarius (strain ATCC 33909 / DSM 639 / JCM 8929 / NBRC 15157 / NCIMB 11770).